The chain runs to 164 residues: SsrA-binding protein (164 aa).

The protein belongs to the SmpB family.

It localises to the cytoplasm. In terms of biological role, required for rescue of stalled ribosomes mediated by trans-translation. Binds to transfer-messenger RNA (tmRNA), required for stable association of tmRNA with ribosomes. tmRNA and SmpB together mimic tRNA shape, replacing the anticodon stem-loop with SmpB. tmRNA is encoded by the ssrA gene; the 2 termini fold to resemble tRNA(Ala) and it encodes a 'tag peptide', a short internal open reading frame. During trans-translation Ala-aminoacylated tmRNA acts like a tRNA, entering the A-site of stalled ribosomes, displacing the stalled mRNA. The ribosome then switches to translate the ORF on the tmRNA; the nascent peptide is terminated with the 'tag peptide' encoded by the tmRNA and targeted for degradation. The ribosome is freed to recommence translation, which seems to be the essential function of trans-translation. The polypeptide is SsrA-binding protein (Shewanella woodyi (strain ATCC 51908 / MS32)).